The primary structure comprises 251 residues: tRNA (guanine-N(7)-)-methyltransferase (251 aa).

Residues Glu-80, Glu-105, Asp-132, and Asp-155 each coordinate S-adenosyl-L-methionine. Asp-155 is a catalytic residue. Substrate-binding positions include Lys-159, Asp-191, and 228–231; that span reads TKFE.

Belongs to the class I-like SAM-binding methyltransferase superfamily. TrmB family.

It carries out the reaction guanosine(46) in tRNA + S-adenosyl-L-methionine = N(7)-methylguanosine(46) in tRNA + S-adenosyl-L-homocysteine. It participates in tRNA modification; N(7)-methylguanine-tRNA biosynthesis. Its function is as follows. Catalyzes the formation of N(7)-methylguanine at position 46 (m7G46) in tRNA. The sequence is that of tRNA (guanine-N(7)-)-methyltransferase from Histophilus somni (strain 129Pt) (Haemophilus somnus).